Here is a 302-residue protein sequence, read N- to C-terminus: TATA-box-binding protein (302 aa).

2 disordered regions span residues 1–22 and 50–81; these read MEQN…GAMT and SLLE…QTPQ. Over residues 50-70 the composition is skewed to low complexity; sequence SLLEEQQRQQQQQQAASQQQG. 2 consecutive repeat copies span residues 128–204 and 218–295.

This sequence belongs to the TBP family. Enriched in testis but hardly detectable in the ovary (at protein level).

The protein localises to the nucleus. In terms of biological role, general transcription factor that functions at the core of the DNA-binding multiprotein factor TFIID. Binding of TFIID to the TATA box is the initial transcriptional step of the pre-initiation complex (PIC), playing a role in the activation of eukaryotic genes transcribed by RNA polymerase II. Members of the TBP family are differentially required for transcription and development during early embryogenesis. Regulates mRNA levels in the early embryo by both transcriptional and post-transcriptional mechanisms. Required for transcription of a subset of genes at the mid-blastula transition (MBT). Negatively regulates the expression of other embryonic genes, including autoregulation of the tbp promoter itself. Also functions within a transcription-dependent mechanism to direct the temporally-regulated degradation of a subset of maternal mRNAs after the MBT. This is part of a general mechanism to regulate the maternal to zygotic transition and is required for normal embryonic development. Binds to promoters of a subset of genes. Required for gastrulation. The polypeptide is TATA-box-binding protein (Danio rerio (Zebrafish)).